The sequence spans 277 residues: Phosphoenolpyruvate synthase regulatory protein (277 aa).

157–164 provides a ligand contact to ADP; the sequence is GVSRCGKT.

It belongs to the pyruvate, phosphate/water dikinase regulatory protein family. PSRP subfamily.

It catalyses the reaction [pyruvate, water dikinase] + ADP = [pyruvate, water dikinase]-phosphate + AMP + H(+). The catalysed reaction is [pyruvate, water dikinase]-phosphate + phosphate + H(+) = [pyruvate, water dikinase] + diphosphate. Its function is as follows. Bifunctional serine/threonine kinase and phosphorylase involved in the regulation of the phosphoenolpyruvate synthase (PEPS) by catalyzing its phosphorylation/dephosphorylation. This chain is Phosphoenolpyruvate synthase regulatory protein, found in Escherichia coli O7:K1 (strain IAI39 / ExPEC).